The sequence spans 968 residues: RNA polymerase-associated protein RapA (968 aa).

The Helicase ATP-binding domain occupies 164-334 (DVGRRHAPRV…FARLRLLDPN (171 aa)). Position 177–184 (177–184 (DEVGLGKT)) interacts with ATP. A DEAH box motif is present at residues 280 to 283 (DEAH). The 196-residue stretch at 490–685 (RVEWLMGYLT…ALKAQLEQGR (196 aa)) folds into the Helicase C-terminal domain.

This sequence belongs to the SNF2/RAD54 helicase family. RapA subfamily. In terms of assembly, interacts with the RNAP. Has a higher affinity for the core RNAP than for the holoenzyme. Its ATPase activity is stimulated by binding to RNAP.

Its function is as follows. Transcription regulator that activates transcription by stimulating RNA polymerase (RNAP) recycling in case of stress conditions such as supercoiled DNA or high salt concentrations. Probably acts by releasing the RNAP, when it is trapped or immobilized on tightly supercoiled DNA. Does not activate transcription on linear DNA. Probably not involved in DNA repair. In Salmonella typhi, this protein is RNA polymerase-associated protein RapA.